The following is a 165-amino-acid chain: NADH-quinone oxidoreductase subunit I (165 aa).

2 4Fe-4S ferredoxin-type domains span residues 66–98 (HRLT…ITAT) and 109–138 (SKFT…MDTG). Cys78, Cys81, Cys84, Cys88, Cys118, Cys121, Cys124, and Cys128 together coordinate [4Fe-4S] cluster.

This sequence belongs to the complex I 23 kDa subunit family. NDH-1 is composed of 14 different subunits. Subunits NuoA, H, J, K, L, M, N constitute the membrane sector of the complex. Requires [4Fe-4S] cluster as cofactor.

The protein localises to the cell inner membrane. The catalysed reaction is a quinone + NADH + 5 H(+)(in) = a quinol + NAD(+) + 4 H(+)(out). In terms of biological role, NDH-1 shuttles electrons from NADH, via FMN and iron-sulfur (Fe-S) centers, to quinones in the respiratory chain. The immediate electron acceptor for the enzyme in this species is believed to be ubiquinone. Couples the redox reaction to proton translocation (for every two electrons transferred, four hydrogen ions are translocated across the cytoplasmic membrane), and thus conserves the redox energy in a proton gradient. This chain is NADH-quinone oxidoreductase subunit I, found in Campylobacter fetus subsp. fetus (strain 82-40).